We begin with the raw amino-acid sequence, 764 residues long: DNA polymerase 3 (764 aa).

This sequence belongs to the DNA polymerase type-B family.

It catalyses the reaction DNA(n) + a 2'-deoxyribonucleoside 5'-triphosphate = DNA(n+1) + diphosphate. In Saccharolobus solfataricus (strain ATCC 35092 / DSM 1617 / JCM 11322 / P2) (Sulfolobus solfataricus), this protein is DNA polymerase 3 (dpo3).